The following is a 224-amino-acid chain: Retinoschisin (224 aa).

The N-terminal stretch at 1-23 (MPHKIEGFFLLLLFGYEATLGLS) is a signal peptide. The region spanning 63 to 219 (CPYHKPLGFE…IAIRMELLEC (157 aa)) is the F5/8 type C domain. 2 disulfide bridges follow: Cys-63–Cys-219 and Cys-110–Cys-142.

As to quaternary structure, homooctamer of 4 homodimers; disulfide-linked. The homooctamer has a flat, cogwheel structure with a diameter of about 14 nm. Two stacked octamers can assemble to form a hexadecamer. In terms of tissue distribution, detected in the eye cup. Detected in retina, in the inner segment of the photoreceptors, the inner nuclear layer, the inner plexiform layer and the ganglion cell layer (at protein level). Restricted to the retina. At the mRNA level, detected only within the photoreceptor cell layer, most prominently within the inner segments of the photoreceptors. Undetectable in the inner plexiform layers and the inner nuclear layer.

Its subcellular location is the secreted. It localises to the cell membrane. In terms of biological role, binds negatively charged membrane lipids, such as phosphatidylserine and phosphoinositides. May play a role in cell-cell adhesion processes in the retina, via homomeric interaction between octamers present on the surface of two neighboring cells. Required for normal structure and function of the retina. The protein is Retinoschisin (Rs1) of Mus musculus (Mouse).